Consider the following 364-residue polypeptide: Dihydroorotate dehydrogenase (quinone) (364 aa).

Residues 62 to 66 (AGFDK) and T86 each bind FMN. K66 is a substrate binding site. 111–115 (NRMGF) lines the substrate pocket. FMN is bound by residues N142 and N175. N175 provides a ligand contact to substrate. S178 (nucleophile) is an active-site residue. Position 180 (N180) interacts with substrate. K216 and T244 together coordinate FMN. 245-246 (NT) is a substrate binding site. FMN-binding positions include G267, G296, and 317–318 (YT).

It belongs to the dihydroorotate dehydrogenase family. Type 2 subfamily. In terms of assembly, monomer. It depends on FMN as a cofactor.

It is found in the cell membrane. It catalyses the reaction (S)-dihydroorotate + a quinone = orotate + a quinol. It functions in the pathway pyrimidine metabolism; UMP biosynthesis via de novo pathway; orotate from (S)-dihydroorotate (quinone route): step 1/1. In terms of biological role, catalyzes the conversion of dihydroorotate to orotate with quinone as electron acceptor. This is Dihydroorotate dehydrogenase (quinone) from Anaeromyxobacter dehalogenans (strain 2CP-1 / ATCC BAA-258).